Reading from the N-terminus, the 267-residue chain is Staphylococcal secretory antigen ssaA2 (267 aa).

An N-terminal signal peptide occupies residues 1-27 (MKKIATATIATAGFATIAIASGNQAHA). A run of 7 repeats spans residues 83–85 (YNN), 86–88 (YNN), 89–91 (YNN), 95–97 (YNN), 101–103 (YNN), 104–106 (YSN), and 113–115 (YNN). Positions 83 to 115 (YNNYNNYNNGYSYNNYSRYNNYSNNNQSYNYNN) are 7 X 3 AA repeats of Y-[NS]-N. In terms of domain architecture, Peptidase C51 spans 146 to 267 (MAPSSNGRSI…SQAAGYNFIH (122 aa)).

The protein localises to the secreted. Functionally, not known; immunogenic protein. This Staphylococcus aureus (strain NCTC 8325 / PS 47) protein is Staphylococcal secretory antigen ssaA2 (ssaA2).